The chain runs to 227 residues: Large ribosomal subunit protein uL3 (227 aa).

Q154 carries the post-translational modification N5-methylglutamine.

Belongs to the universal ribosomal protein uL3 family. As to quaternary structure, part of the 50S ribosomal subunit. Forms a cluster with proteins L14 and L19. In terms of processing, methylated by PrmB.

Its function is as follows. One of the primary rRNA binding proteins, it binds directly near the 3'-end of the 23S rRNA, where it nucleates assembly of the 50S subunit. The sequence is that of Large ribosomal subunit protein uL3 from Acidiphilium cryptum (strain JF-5).